The following is a 273-amino-acid chain: Formamidopyrimidine-DNA glycosylase (273 aa).

The active-site Schiff-base intermediate with DNA is the proline 2. Glutamate 3 (proton donor) is an active-site residue. Lysine 58 functions as the Proton donor; for beta-elimination activity in the catalytic mechanism. DNA-binding residues include histidine 92, arginine 111, and arginine 153. The FPG-type zinc finger occupies 238–272 (RVYGREGQKCFNCSSTILKTKNSGRSTFYCKTCQY). Catalysis depends on arginine 262, which acts as the Proton donor; for delta-elimination activity.

Belongs to the FPG family. Monomer. Requires Zn(2+) as cofactor.

It catalyses the reaction Hydrolysis of DNA containing ring-opened 7-methylguanine residues, releasing 2,6-diamino-4-hydroxy-5-(N-methyl)formamidopyrimidine.. The catalysed reaction is 2'-deoxyribonucleotide-(2'-deoxyribose 5'-phosphate)-2'-deoxyribonucleotide-DNA = a 3'-end 2'-deoxyribonucleotide-(2,3-dehydro-2,3-deoxyribose 5'-phosphate)-DNA + a 5'-end 5'-phospho-2'-deoxyribonucleoside-DNA + H(+). Its function is as follows. Involved in base excision repair of DNA damaged by oxidation or by mutagenic agents. Acts as a DNA glycosylase that recognizes and removes damaged bases. Has a preference for oxidized purines, such as 7,8-dihydro-8-oxoguanine (8-oxoG). Has AP (apurinic/apyrimidinic) lyase activity and introduces nicks in the DNA strand. Cleaves the DNA backbone by beta-delta elimination to generate a single-strand break at the site of the removed base with both 3'- and 5'-phosphates. The sequence is that of Formamidopyrimidine-DNA glycosylase from Rickettsia canadensis (strain McKiel).